The chain runs to 449 residues: Omega-amino acid--pyruvate aminotransferase (449 aa).

W60 provides a ligand contact to substrate. 119 to 120 (GS) contacts pyridoxal 5'-phosphate. K288 carries the post-translational modification N6-(pyridoxal phosphate)lysine. T327 contributes to the pyridoxal 5'-phosphate binding site. The substrate site is built by R414 and Q421.

It belongs to the class-III pyridoxal-phosphate-dependent aminotransferase family. As to quaternary structure, homotetramer. Pyridoxal 5'-phosphate is required as a cofactor.

It catalyses the reaction 3-oxopropanoate + L-alanine = beta-alanine + pyruvate. Functionally, catalyzes transamination between a variety of omega-amino acids, mono and diamines, and pyruvate. Plays a pivotal role in the metabolism of the omega amino acids. The polypeptide is Omega-amino acid--pyruvate aminotransferase (Pseudomonas putida (Arthrobacter siderocapsulatus)).